Reading from the N-terminus, the 566-residue chain is MPDLKERAARKEPGAAESASRESRGGNTRESASSAQGHRSRRFNRRSSTAALTPGSAQGRGVQTAPRAPVGHGGLRTGLTSRCPQPSARAKLPSVTRGAPLPPSPGKGHFGATPISHRLGLTERVHDASKLDCHLEDRKSASSLESRGKEVMPSDFWDHLKEQLSAVPPDFSCALELLKEIKEILLSLLLPRQSRLRNEIEEALDMEFLHQQADRGDLNVSYLSKYILNMMVLLCAPVRDEAVQRLENISDPVRLLRGIFQVLGQMKMDMVNYTIQSLQPQLQEHSIQFERAQFQERLNKDPSLLNHTTKWLTQAATQLIAPSGSCYDIQDPSSSSGPSPSDIAIPEPLSPAMVLSQGFLNLLTWDPENEEFPETLLADRSRLQELESQQNQLTILASVLLVASSFSGSVLFGSPQFVDRLKRITKSLVEDFNSRPEEVMQTVSDQVTEEIHQSLKNMGLSPLSSENTDSLIGQLQNIAKKENCVRSVIDQRIHLFLKCCFVLGVQRSLLDLPGGLSLIEAELAELGQKFVSLTHHNQQVFAPYYTEILKTLINPVQTLTTKVGSL.

Basic and acidic residues predominate over residues 1-24; it reads MPDLKERAARKEPGAAESASRESR. Disordered stretches follow at residues 1-112 and 328-347; these read MPDL…HFGA and DIQD…AIPE. A compositionally biased stretch (polar residues) spans 25-37; sequence GGNTRESASSAQG. Ser-104 carries the phosphoserine modification. The span at 332 to 341 shows a compositional bias: low complexity; sequence PSSSSGPSPS. Residues 393–413 form a helical membrane-spanning segment; that stretch reads LTILASVLLVASSFSGSVLFG. Residue Ser-461 is modified to Phosphoserine.

It belongs to the TCP11 family. In terms of assembly, found in a complex at least composed of MROH2B isoform 2, PRKACA isoform 2 and TCP11. Interacts with MROH2B isoform 2. Interacts with PRKACA isoform 2. Interacts with ODF1 (via leucine zipper motif). Constitutively phosphorylated on serine, threonine and tyrosine residues within the head and tail regions of noncapacitated spermatozoa. Phosphorylation on tyrosine residues increases upon sperm capacitation within the acrosomal region in a protein kinase A (PKA)-dependent signaling pathway.

The protein resides in the membrane. Its subcellular location is the cell projection. It localises to the cilium. The protein localises to the flagellum. It is found in the cytoplasmic vesicle. The protein resides in the secretory vesicle. Its subcellular location is the acrosome. Its function is as follows. Plays a role in the process of sperm capacitation and acrosome reactions. Probable receptor for the putative fertilization-promoting peptide (FPP) at the sperm membrane that may modulate the activity of the adenylyl cyclase cAMP pathway. The polypeptide is T-complex protein 11 homolog (Tcp11) (Rattus norvegicus (Rat)).